A 396-amino-acid polypeptide reads, in one-letter code: Elongation factor Tu 2 (396 aa).

Residues 10–206 (KPHVNIGTIG…AVDSYIPTPQ (197 aa)) enclose the tr-type G domain. Residues 19 to 26 (GHVDHGKT) form a G1 region. 19 to 26 (GHVDHGKT) is a binding site for GTP. Mg(2+) is bound at residue T26. Positions 60–64 (GITIS) are G2. The interval 81 to 84 (DCPG) is G3. Residues 81–85 (DCPGH) and 136–139 (NKVD) contribute to the GTP site. The segment at 136–139 (NKVD) is G4. The G5 stretch occupies residues 174-176 (SAL).

The protein belongs to the TRAFAC class translation factor GTPase superfamily. Classic translation factor GTPase family. EF-Tu/EF-1A subfamily. Monomer.

It is found in the cytoplasm. It catalyses the reaction GTP + H2O = GDP + phosphate + H(+). GTP hydrolase that promotes the GTP-dependent binding of aminoacyl-tRNA to the A-site of ribosomes during protein biosynthesis. The protein is Elongation factor Tu 2 of Myxococcus xanthus (strain DK1622).